Here is a 162-residue protein sequence, read N- to C-terminus: Flagellar assembly factor FliW (162 aa).

The protein belongs to the FliW family. As to quaternary structure, interacts with translational regulator CsrA and flagellin(s).

It is found in the cytoplasm. Functionally, acts as an anti-CsrA protein, binds CsrA and prevents it from repressing translation of its target genes, one of which is flagellin. Binds to flagellin and participates in the assembly of the flagellum. In Alkaliphilus metalliredigens (strain QYMF), this protein is Flagellar assembly factor FliW.